The following is a 422-amino-acid chain: MTKDFKISVSAALISALFSSPYAFANNDEVHFTAVQISPNSDPDSHVMIFQPEVRAPGGTNALAKGTHSIAVGASAEAAERAAVAVGAGSIATGVNSVAIGPLSKALGDSAVTYGAGSTAQKDGVAIGARASTSDTGVAVGFNSKVDAKNSVSIGHSSHVAVDHDYSIAIGDRSKTDRKNSVSIGHESLNRQLTHLAAGTKDTDAVNVAQLKKEIEKTQENANKKSAEVLGIANNYTDSKSAETLENARKEAFDLSNDALDMAKKHSNSVARTTLETAEEHTNKKSAETLASANVYADSKSSHTLKTANSYTDVTVSNSTKKAIRESNQYTDHKFHQLDNRLDKLDTRVDKGLASSAALNSLFQPYGVGKVNFTAGVGGYRSSQALAIGSGYRVNESVALKAGVAYAGSSDVMYNASFNIEW.

A signal peptide spans 1-25 (MTKDFKISVSAALISALFSSPYAFA). The tract at residues 26-330 (NNDEVHFTAV…KKAIRESNQY (305 aa)) is surface exposed passenger domain. A coiled-coil region spans residues 216–362 (EKTQENANKK…LASSAALNSL (147 aa)). An outer membrane translocation of the passenger domain region spans residues 331-369 (TDHKFHQLDNRLDKLDTRVDKGLASSAALNSLFQPYGVG). Transmembrane regions (beta stranded) follow at residues 369-379 (GKVNFTAGVGG), 383-394 (SQALAIGSGYRV), 401-407 (KAGVAYA), and 411-422 (DVMYNASFNIEW). The tract at residues 370 to 422 (KVNFTAGVGGYRSSQALAIGSGYRVNESVALKAGVAYAGSSDVMYNASFNIEW) is translocator domain.

This sequence belongs to the autotransporter-2 (AT-2) (TC 1.B.40) family. Homotrimer.

It localises to the cell surface. The protein resides in the cell outer membrane. Collagen-binding outer membrane protein forming a fibrillar matrix on the bacterial cell surface. Promotes initial attachment and invasion of eukaryotic cells. Also protects the bacteria by being responsible for agglutination, serum resistance, complement inactivation and phagocytosis resistance. The sequence is that of Adhesin YadA (yadA) from Yersinia enterocolitica.